The following is a 2924-amino-acid chain: Zinc finger ZZ-type and EF-hand domain-containing protein 1 (2924 aa).

Residues 1–41 (MGNAPSNSSEDEAAAAGGEGWSPHQDWAADSGTTPGPGPAA) form a disordered region. Gly2 carries the N-myristoyl glycine lipid modification. Positions 28–41 (AADSGTTPGPGPAA) are enriched in low complexity. One can recognise an EF-hand domain in the interval 111-146 (CSGEQFEEAFAQFDAEGDGTVDAENMLEALKNSSGA). Residues 226-405 (LVQKEKESPG…AIWYWSLLTS (180 aa)) form the DOC domain. A Phosphoserine modification is found at Ser240. Positions 1452–1470 (HLQPLDRRQRTSSVVEEHF) are enriched in basic and acidic residues. Residues 1452–1527 (HLQPLDRRQR…STPTRRPPFT (76 aa)) are disordered. Over residues 1472–1485 (GSASPTEAATPAAG) the composition is skewed to low complexity. A phosphoserine mark is found at Ser1475, Ser1488, and Ser1509. Thr1510 carries the phosphothreonine modification. The segment covering 1514–1523 (PSPPSTPTRR) has biased composition (pro residues). Ser1515 carries the post-translational modification Phosphoserine. Phosphothreonine is present on residues Thr1519 and Thr1521. Phosphoserine occurs at positions 1535 and 1538. 2 ZZ-type zinc fingers span residues 1776–1831 (NVDI…FTCD) and 1825–1880 (NMEF…MVTI). Zn(2+)-binding residues include Cys1781, Cys1784, Cys1795, Cys1798, Cys1804, Cys1807, His1817, His1821, Cys1830, Cys1833, Cys1844, Cys1847, Cys1853, Cys1856, His1866, and His1870. The tract at residues 2388-2418 (DLELDERGDQEEELDRPVSSPGEAEQKKLDP) is disordered. Residue Ser2407 is modified to Phosphoserine. Lys2630 carries the N6-acetyllysine modification.

In terms of assembly, interacts with KLF6 and KLF9. Interacts via (ZZ-type 2 zinc finger) with histone H3 trimethylated at 'Lys-4' (H3K4me3) and histone H3 acetylated at 'Lys-4' (H3K4ac).

In terms of biological role, histone H3 reader which may act as a transcriptional coactivator for KLF6 and KLF9 transcription factors. The sequence is that of Zinc finger ZZ-type and EF-hand domain-containing protein 1 (Zzef1) from Mus musculus (Mouse).